The following is a 171-amino-acid chain: UPF0398 protein MGAS9429_Spy1349 (171 aa).

Belongs to the UPF0398 family.

In Streptococcus pyogenes serotype M12 (strain MGAS9429), this protein is UPF0398 protein MGAS9429_Spy1349.